The following is a 485-amino-acid chain: Transcription factor ETV6 (485 aa).

The span at 1–10 shows a compositional bias: polar residues; it reads MSETPAQSSI. The tract at residues 1–32 is disordered; it reads MSETPAQSSIKQERISYTPPESPVASHRSSTP. The residue at position 11 (lysine 11) is an N6-acetyllysine; alternate. Lysine 11 participates in a covalent cross-link: Glycyl lysine isopeptide (Lys-Gly) (interchain with G-Cter in SUMO2); alternate. Threonine 18 carries the post-translational modification Phosphothreonine. Serine 22 carries the post-translational modification Phosphoserine. Residues 41–125 enclose the PNT domain; the sequence is ALRMEEDSIH…ELLQHILKQR (85 aa). The interval 157–210 is disordered; it reads NCVQRTPRTPAESVHHNPPTIELLHRPRSPITTNHRPSPDPEQQRPQRSPLDNM. Threonine 165 is modified (phosphothreonine). A phosphoserine mark is found at serine 215, serine 240, and serine 251. A Glycyl lysine isopeptide (Lys-Gly) (interchain with G-Cter in SUMO2) cross-link involves residue lysine 284. Residue lysine 298 is modified to N6-acetyllysine; alternate. Lysine 298 is covalently cross-linked (Glycyl lysine isopeptide (Lys-Gly) (interchain with G-Cter in SUMO2); alternate). Serine 319 is modified (phosphoserine). The ETS DNA-binding region spans 335 to 416; the sequence is RLLWDYVYQL…PGQRLLFRFM (82 aa). Glycyl lysine isopeptide (Lys-Gly) (interchain with G-Cter in SUMO2) cross-links involve residues lysine 399 and lysine 417. The interval 440–485 is disordered; it reads EQTYQEDEPTIASPVGWPRGNLPTGTAGGVMEAGELGVAVKEETRE.

It belongs to the ETS family. As to quaternary structure, can form homodimers or heterodimers with TEL2 or FLI1. Interacts with L3MBTL1 and HDAC9.

It localises to the nucleus. Functionally, transcriptional repressor; binds to the DNA sequence 5'-CCGGAAGT-3'. Plays a role in hematopoiesis and malignant transformation. This Mus musculus (Mouse) protein is Transcription factor ETV6 (Etv6).